A 263-amino-acid polypeptide reads, in one-letter code: Zinc finger protein STAMENLESS 1 (263 aa).

Residues 1-51 (MNSSRRQEGSPLDLNNLPDEFGKQTVESSTTTAASSAEASRVTKKKSNGGK) are disordered. A compositionally biased stretch (low complexity) spans 25 to 40 (TVESSTTTAASSAEAS). The C2H2-type zinc finger occupies 58–80 (YECRFCSLKFCKSQALGGHMNRH).

Expressed in leaf primordia, inflorescence meristem, rachis branch meristems, floral meristem and floral organ primordia.

It is found in the nucleus. In terms of biological role, regulates floral organ identity and cell proliferation in the inner floral whorls. Probably specifies the identities of lodicule and stamen through positive regulation of MADS16 expression. May contribute to morphogenesis by suppressing OSH1 expression in the lateral organs. This Oryza sativa subsp. japonica (Rice) protein is Zinc finger protein STAMENLESS 1 (SL1).